Reading from the N-terminus, the 62-residue chain is Large ribosomal subunit protein uL29 (62 aa).

The protein belongs to the universal ribosomal protein uL29 family.

The chain is Large ribosomal subunit protein uL29 from Oleidesulfovibrio alaskensis (strain ATCC BAA-1058 / DSM 17464 / G20) (Desulfovibrio alaskensis).